A 172-amino-acid chain; its full sequence is RNA pyrophosphohydrolase (172 aa).

Positions 6 to 149 constitute a Nudix hydrolase domain; it reads GFRANVGIII…KRDVYRKVMK (144 aa). A Nudix box motif is present at residues 38 to 59; sequence GGLDDGESAEEAMYRELYEEVG.

The protein belongs to the Nudix hydrolase family. RppH subfamily. A divalent metal cation serves as cofactor.

Its function is as follows. Accelerates the degradation of transcripts by removing pyrophosphate from the 5'-end of triphosphorylated RNA, leading to a more labile monophosphorylated state that can stimulate subsequent ribonuclease cleavage. This is RNA pyrophosphohydrolase from Shewanella denitrificans (strain OS217 / ATCC BAA-1090 / DSM 15013).